We begin with the raw amino-acid sequence, 338 residues long: 1-aminocyclopropane-1-carboxylate deaminase (338 aa).

Lys51 carries the post-translational modification N6-(pyridoxal phosphate)lysine. Catalysis depends on Ser78, which acts as the Nucleophile.

It belongs to the ACC deaminase/D-cysteine desulfhydrase family. As to quaternary structure, homotrimer. The cofactor is pyridoxal 5'-phosphate.

The enzyme catalyses 1-aminocyclopropane-1-carboxylate + H2O = 2-oxobutanoate + NH4(+). Functionally, catalyzes a cyclopropane ring-opening reaction, the irreversible conversion of 1-aminocyclopropane-1-carboxylate (ACC) to ammonia and alpha-ketobutyrate. Allows growth on ACC as a nitrogen source. This chain is 1-aminocyclopropane-1-carboxylate deaminase, found in Acidovorax ebreus (strain TPSY) (Diaphorobacter sp. (strain TPSY)).